Here is a 270-residue protein sequence, read N- to C-terminus: L-aspartate dehydrogenase (270 aa).

Ala-123 and Asn-191 together coordinate NAD(+). His-221 is a catalytic residue.

The protein belongs to the L-aspartate dehydrogenase family.

The enzyme catalyses L-aspartate + NADP(+) + H2O = oxaloacetate + NH4(+) + NADPH + H(+). The catalysed reaction is L-aspartate + NAD(+) + H2O = oxaloacetate + NH4(+) + NADH + H(+). It participates in cofactor biosynthesis; NAD(+) biosynthesis; iminoaspartate from L-aspartate (dehydrogenase route): step 1/1. Its function is as follows. Specifically catalyzes the NAD or NADP-dependent dehydrogenation of L-aspartate to iminoaspartate. The sequence is that of L-aspartate dehydrogenase from Methanocella arvoryzae (strain DSM 22066 / NBRC 105507 / MRE50).